A 189-amino-acid polypeptide reads, in one-letter code: Imidazoleglycerol-phosphate dehydratase (189 aa).

The protein belongs to the imidazoleglycerol-phosphate dehydratase family.

Its subcellular location is the cytoplasm. The catalysed reaction is D-erythro-1-(imidazol-4-yl)glycerol 3-phosphate = 3-(imidazol-4-yl)-2-oxopropyl phosphate + H2O. It functions in the pathway amino-acid biosynthesis; L-histidine biosynthesis; L-histidine from 5-phospho-alpha-D-ribose 1-diphosphate: step 6/9. This chain is Imidazoleglycerol-phosphate dehydratase, found in Nautilia profundicola (strain ATCC BAA-1463 / DSM 18972 / AmH).